The chain runs to 311 residues: NAD kinase (311 aa).

Asp-67 serves as the catalytic Proton acceptor. Residues 67-68 (DG), Arg-72, 140-141 (ND), Arg-151, Asp-170, 181-186 (TAYSLS), and Gln-240 each bind NAD(+). Residues 278-287 (LKEGGSRQDD) show a composition bias toward basic and acidic residues. Residues 278 to 311 (LKEGGSRQDDENPAATVNPETDSKYPHSHPGSTG) are disordered.

It belongs to the NAD kinase family. Requires a divalent metal cation as cofactor.

It localises to the cytoplasm. The enzyme catalyses NAD(+) + ATP = ADP + NADP(+) + H(+). Involved in the regulation of the intracellular balance of NAD and NADP, and is a key enzyme in the biosynthesis of NADP. Catalyzes specifically the phosphorylation on 2'-hydroxyl of the adenosine moiety of NAD to yield NADP. The chain is NAD kinase from Moorella thermoacetica (strain ATCC 39073 / JCM 9320).